Consider the following 656-residue polypeptide: uncharacterized protein (656 aa).

Residues 623-656 (EIDIPGTPASIDPEWSRPPGSITDDHVFDAPLHR) are disordered. The span at 645–656 (TDDHVFDAPLHR) shows a compositional bias: basic and acidic residues.

This is an uncharacterized protein from Mycobacterium tuberculosis (strain CDC 1551 / Oshkosh).